The primary structure comprises 89 residues: UPF0223 protein BCA_4066 (89 aa).

The protein belongs to the UPF0223 family.

In Bacillus cereus (strain 03BB102), this protein is UPF0223 protein BCA_4066.